Consider the following 412-residue polypeptide: STAGA complex 65 subunit gamma (412 aa).

The interval 81–107 (AQTQSQQQTEGVKAEESEPLPSCPGSP) is disordered. Residue Ser-106 is modified to Phosphoserine. Lys-269 is covalently cross-linked (Glycyl lysine isopeptide (Lys-Gly) (interchain with G-Cter in SUMO2)). 2 positions are modified to phosphoserine: Ser-321 and Ser-332. Positions 364-412 (EEPMSGMSEAGLPQSPDDSDSSYGSHSTDSLMGSSPVFNQRCRKRMRKI) are disordered. Over residues 384-393 (SSYGSHSTDS) the composition is skewed to low complexity.

As to quaternary structure, component of the STAGA transcription coactivator-HAT complex, at least composed of SUPT3H, SUPT7L, GCN5L2, TAF5L, TAF6L, TADA3L, TAD1L, TAF10, TAF12 and TAF9. In terms of processing, sumoylated.

Its subcellular location is the nucleus. This is STAGA complex 65 subunit gamma (Supt7l) from Mus musculus (Mouse).